The sequence spans 185 residues: MINEINKDAQERMDKSVEALKNNLSKVRTGRAHPSLLSGISVEYYGAPTPLNQVANVVAEDARTLAITVFDKELTQKVEKAIMMSDLGLNPMSAGTIIRVPLPPLTEERRKDLVKIVRGEAEGSRVAVRNIRRDANSDLKGLLKDKEISEDEDRKAQDEIQKLTDVAVKKIDEVLAAKEKELMEV.

It belongs to the RRF family.

It is found in the cytoplasm. Its function is as follows. Responsible for the release of ribosomes from messenger RNA at the termination of protein biosynthesis. May increase the efficiency of translation by recycling ribosomes from one round of translation to another. This is Ribosome-recycling factor from Vibrio campbellii (strain ATCC BAA-1116).